We begin with the raw amino-acid sequence, 291 residues long: Probable L-ascorbate peroxidase 3, peroxisomal (291 aa).

His-41 functions as the Proton acceptor in the catalytic mechanism. A disordered region spans residues 114–133 (YVPGRRDSSDSPEEGRLPDA). Basic and acidic residues predominate over residues 116 to 133 (PGRRDSSDSPEEGRLPDA). His-161 provides a ligand contact to heme b. Residues Thr-162, Thr-178, and Asp-185 each coordinate K(+). The helical transmembrane segment at 263–283 (LLMQTAAGVAVAAAVVAWAYL) threads the bilayer.

The protein belongs to the peroxidase family. Ascorbate peroxidase subfamily. It depends on heme b as a cofactor. Expressed in stems.

The protein localises to the peroxisome membrane. The enzyme catalyses L-ascorbate + H2O2 = L-dehydroascorbate + 2 H2O. Its function is as follows. Plays a key role in hydrogen peroxide removal. In Oryza sativa subsp. japonica (Rice), this protein is Probable L-ascorbate peroxidase 3, peroxisomal.